The following is a 493-amino-acid chain: CBL-interacting protein kinase 26 (493 aa).

The Protein kinase domain maps to 12-266 (YEIGRQLGQG…IPKIKRSAWY (255 aa)). Residues 18 to 26 (LGQGNFAKV) and K41 contribute to the ATP site. Residue D134 is the Proton acceptor of the active site. The segment at 152–181 (DFGLSALSESKRHDGLLHTTCGTPAYVAPE) is activation loop. The interval 311–332 (KVYTNGEATTSDSPECSNSDGK) is disordered. Residues 316 to 332 (GEATTSDSPECSNSDGK) are compositionally biased toward polar residues. Residues 320-360 (TSDSPECSNSDGKQASLSLPNLNAFDIISLSTGFDLSNLFE) enclose the NAF domain. Residues 365–394 (RREERFTTRQPAAAIFAKLNELARRFKLKI) are PPI. The interval 465 to 493 (GQHQQPEQSMQGMQGEQQPSRLPSQQPQG) is disordered.

Belongs to the protein kinase superfamily. CAMK Ser/Thr protein kinase family. SNF1 subfamily. Mn(2+) serves as cofactor.

It carries out the reaction L-seryl-[protein] + ATP = O-phospho-L-seryl-[protein] + ADP + H(+). It catalyses the reaction L-threonyl-[protein] + ATP = O-phospho-L-threonyl-[protein] + ADP + H(+). In terms of biological role, CIPK serine-threonine protein kinases interact with CBL proteins. Binding of a CBL protein to the regulatory NAF domain of CIPK protein lead to the activation of the kinase in a calcium-dependent manner. The protein is CBL-interacting protein kinase 26 (CIPK26) of Oryza sativa subsp. japonica (Rice).